The following is a 200-amino-acid chain: Dephospho-CoA kinase (200 aa).

The DPCK domain occupies 4–200 (TIGLTGSVAT…TFIERFVKNK (197 aa)). Position 12–17 (12–17 (ATGKST)) interacts with ATP.

The protein belongs to the CoaE family.

Its subcellular location is the cytoplasm. It catalyses the reaction 3'-dephospho-CoA + ATP = ADP + CoA + H(+). Its pathway is cofactor biosynthesis; coenzyme A biosynthesis; CoA from (R)-pantothenate: step 5/5. Its function is as follows. Catalyzes the phosphorylation of the 3'-hydroxyl group of dephosphocoenzyme A to form coenzyme A. The sequence is that of Dephospho-CoA kinase from Listeria monocytogenes serovar 1/2a (strain ATCC BAA-679 / EGD-e).